Here is a 584-residue protein sequence, read N- to C-terminus: 65 kDa protein (584 aa).

The Toprim domain occupies 459 to 548 (YDLYIAESAI…TKKVENWLPP (90 aa)).

This Zymomonas mobilis subsp. mobilis (strain ATCC 10988 / DSM 424 / LMG 404 / NCIMB 8938 / NRRL B-806 / ZM1) protein is 65 kDa protein.